Consider the following 208-residue polypeptide: MKNLLCAVMLTSPLLYSTAVFADDAQQLRNTLVNTASLKTDFKQTVTDVNKKVIQTGSGILALAHPNQFYWHLTSPDESQIVADGKDLWIYNPFAEEVVIMDFAEAINASPIALLVHRDDTTWSQYSVTKKQDCYDIRPKAIDSGIVTVSVCFKNSQLTKFNVLDDKGNISQFDLSNQKVITTEDKALFKFVLPENVDIDDQRLKTLN.

The N-terminal stretch at 1-22 is a signal peptide; the sequence is MKNLLCAVMLTSPLLYSTAVFA.

It belongs to the LolA family. Monomer.

The protein resides in the periplasm. Participates in the translocation of lipoproteins from the inner membrane to the outer membrane. Only forms a complex with a lipoprotein if the residue after the N-terminal Cys is not an aspartate (The Asp acts as a targeting signal to indicate that the lipoprotein should stay in the inner membrane). The chain is Outer-membrane lipoprotein carrier protein from Shewanella putrefaciens (strain CN-32 / ATCC BAA-453).